The following is a 735-amino-acid chain: MATDSSMPGTVIGKAEFSDTKAASEFGTDLSRWRLNVDNGRHMWEYLESEDEARKRPQSFLEKYWLGLPYELPARPRATCALEAVENGWEFFKRLQTADGHWGCNDDGPLFVTSGMVIARYIVGIPIDSHMKQEMCRYLLNVVNEDGGWGLFIQSPSTVFGTVMNYCMLRILGLGPEHPAMAKARNTLHRLGSARATPTWGKFWLCVLGVYEWEGMVPLPPEPLLVPASLPFNPGKWWVHTRNVYISMSYLYGHRFSMPPNKLVQALRDELYDIPYQQINWPAQRTNVSAADRLTDPTWIQRSFTSALTMYETFKIPFLRRRALNEALFQIETETRNTHYLCIAPVSFASNMLALYHAHGRDSHWIRGMRDRFIDPMWLCREGLAASGTNGTSLWDTALTVQATIDAGLAARPENQAILRKALEFIDNSQIREDPLGVHHVYRQPTRGAWPFSTRDQSYAVSDTTAEAVKVIVLLQRIEGFPSRISDERLQQAIDLILGMENAGGGFSAYEPVRGPKFLELLNITELYENVMTDNLYPECTSSVIMCLTTFAREYPTYRPRDIQACLSRSIDYLLRSQYPNGGWFASWGVCFTYATMFALQGLACMGWNESNCAACQRACSFLLQHQNPDGGWGESLDTVRFKQYLPHPDGSQVTNTAYAVIGLLAARCGNHEAIRRGVAYLVKEQQDTGEWLPGPLEGVFAPPGGMRYPNYKFHFTLMALGRYVAIHGNECLAI.

One copy of the PFTB 1 repeat lies at 132-173 (KQEMCRYLLNVVNEDGGWGLFIQSPSTVFGTVMNYCMLRILG). D463 (proton donor) is an active-site residue. PFTB repeat units follow at residues 490 to 531 (LQQA…YENV), 567 to 607 (LSRS…ACMG), and 616 to 663 (CQRA…AVIG).

Belongs to the terpene cyclase/mutase family.

It carries out the reaction (S)-2,3-epoxysqualene = (17Z)-protosta-17(20),24-dien-3beta-ol. The protein operates within mycotoxin biosynthesis. Protostadienol synthase; part of the gene cluster that mediates the biosynthesis of helvolic acid, an antibacterial nortriterpenoid. Protostadienol synthase helA cyclizes (3S)-oxidosqualene to (17Z)-protosta-17(20),24-dien-3-beta-ol (protostadienol). The synthesis of protostadienol is followed by several steps of monooxygenation, dehydrogenation, and acyl transfer to yield the final helvolic acid. Following the cyclization to the tetracyclic protostadienol by helA, cytochrome P450 monooxygenases helB1-mediated and helB2-mediated oxidation at C-4 and C-16, acyltransferase helD2-dependent acetylation of 16-OH, oxidation of C-21 by cytochrome P450 monooxygenase helB4, and short chain dehydrogenase helC-dependent oxidative decarboxylation yield the fusidane skeleton. This intermediate is further modified in three additional steps mediated by the cytochrome P450 monooxygenase helB3, the acyltransferase helD1, and the 3-ketosteroid 1-dehydrogenase helE to give helvolic acid. Compared with the late stages in the biosynthesis of helvolic acid, enzymes involved in the early stage modifications act in a relatively strict order. The hydroxylation of C-16 by helB1 and subsequent acetylation by helD2 should occur before the helB3-mediated oxidation of C-21. C-4 demethylation in fusidane-type antibiotics proceeds in an unusual manner though it is also achieved by oxidative decarboxylation. The methyl group at C-4 beta position is oxidized by helB1 and subsequently removed by the short chain dehydrogenase helC. In Aspergillus fumigatus (strain ATCC MYA-4609 / CBS 101355 / FGSC A1100 / Af293) (Neosartorya fumigata), this protein is Protostadienol synthase helA.